The primary structure comprises 53 residues: ATP synthase protein 8 (53 aa).

Residues 6–26 form a helical membrane-spanning segment; sequence PIGWLSLFIIFSLTFILFSMM.

This sequence belongs to the ATPase protein 8 family. In terms of assembly, F-type ATPases have 2 components, CF(1) - the catalytic core - and CF(0) - the membrane proton channel.

The protein resides in the mitochondrion membrane. Mitochondrial membrane ATP synthase (F(1)F(0) ATP synthase or Complex V) produces ATP from ADP in the presence of a proton gradient across the membrane which is generated by electron transport complexes of the respiratory chain. F-type ATPases consist of two structural domains, F(1) - containing the extramembraneous catalytic core and F(0) - containing the membrane proton channel, linked together by a central stalk and a peripheral stalk. During catalysis, ATP synthesis in the catalytic domain of F(1) is coupled via a rotary mechanism of the central stalk subunits to proton translocation. Part of the complex F(0) domain. Minor subunit located with subunit a in the membrane. In Ceratitis capitata (Mediterranean fruit fly), this protein is ATP synthase protein 8 (mt:ATPase8).